Here is a 952-residue protein sequence, read N- to C-terminus: Microtubule-associated protein 6 (952 aa).

The segment at 1–15 (MAWPCITRACCIARF) is calmodulin-binding. Residues C5, C10, and C11 are each lipidated (S-palmitoyl cysteine). 2 disordered regions span residues 37–457 (TEHP…RAVA) and 486–952 (IKPV…EGSP). Over residues 41–55 (GAPPQPPAPPQPGLA) the composition is skewed to pro residues. S98 is subject to Phosphoserine. Positions 105-117 (ASGSTSGSGPADS) are enriched in low complexity. The interval 116–139 (DSVMRQDYRAWKVQRPEPSCRPRS) is mn 1. Positions 119–139 (MRQDYRAWKVQRPEPSCRPRS) are enriched in basic and acidic residues. The tract at residues 124–138 (RAWKVQRPEPSCRPR) is calmodulin-binding. Y141 is subject to Phosphotyrosine. The span at 147-171 (PFERETQYQKDFRAWPLPRRGDHPW) shows a compositional bias: basic and acidic residues. The mn 2 stretch occupies residues 151–174 (ETQYQKDFRAWPLPRRGDHPWIPK). A calmodulin-binding region spans residues 160–174 (AWPLPRRGDHPWIPK). The residue at position 185 (S185) is a Phosphoserine. A calmodulin-binding region spans residues 187–201 (PVLGMPKRRPQSQER). The residue at position 207 (S207) is a Phosphoserine. Residues 221 to 230 (VPAAGKASGA) are compositionally biased toward low complexity. A Mc-1 repeat occupies 222 to 267 (PAAGKASGADQRDTRRKAGPAWMVTRTEGHEEKPLPPAQSQTQEGG). The interval 222-451 (PAAGKASGAD…HAQGTGPEGG (230 aa)) is 5 X approximate tandem repeat Mc. Calmodulin-binding regions lie at residues 235–249 (TRRK…TRTE), 280–294 (DTRR…VTRT), 325–339 (RDTR…MVTR), 373–387 (TRRK…TRTE), 421–435 (RKAG…SEGH), 481–495 (RAWT…IKAK), 532–546 (RRRI…FKES), and 559–573 (PKKT…RKAK). A Mc-2 repeat occupies 268-313 (PAAGKASGADQRDTRRKAGPAWMVTRTEGHEEKPLPPAQSQTQEGG). A Mc-3 repeat occupies 314–359 (PAAGKASGADQRDTRRKAGPAWMVTRTEGHEETPLPPAQSQTQEGG). A Mc-4 repeat occupies 360 to 405 (PAAGKASGADQRDTRRKAGPAWMVTRTEGHEETPLPPAQSQTQEGG). The Mc-5 repeat unit spans residues 406 to 451 (PAAGKASGADERDTRRKAGPAWMVRRSEGHEQTTAAHAQGTGPEGG). Residues 473–496 (SSSYRNEFRAWTDIKPVKPIKAKP) are mn 3. Residues 542 to 551 (PFKESPKVEK) are compositionally biased toward basic and acidic residues. The segment covering 552–567 (PSVQSSKPKKTSTSQK) has biased composition (low complexity). The residue at position 590 (S590) is a Phosphoserine. The segment covering 595 to 621 (KPDDKEQSKEMNNKLAEAKESRVKPTS) has biased composition (basic and acidic residues). S681 carries the phosphoserine modification. Residues 711 to 725 (KDQDHMASELLKNKD) are compositionally biased toward basic and acidic residues. S736 is subject to Phosphoserine. Positions 761–775 (APAPTPLKDPGPVIP) are enriched in pro residues. 2 stretches are compositionally biased toward basic and acidic residues: residues 776–792 (EPEK…RKDQ) and 821–831 (PAKDTGTDLKG). Residues 903 to 915 (VPAPTKDPGPTAP) show a composition bias toward pro residues. S951 carries the phosphoserine modification.

Belongs to the STOP family. Interacts with calmodulin (via C-terminus); the interaction is dependent on Ca(2+). Interacts (via C-terminus) with TMEM106B (via N-terminus). Interacts with ZDHHC13 (via ANK repeats). Interacts with ZDHHC17 (via ANK repeats). In terms of processing, palmitoylated. Probably depalmitoylated by ABHD17A, ABHD17B and ABHD17C. During neuronal polarization, palmitoylation and depalmitoylation cycles regulate MAP6 shuttling between secretory vesicles and microtubules, and its polarized distribution in the axon. As to expression, isoform 1 is specifically expressed in adult brain. Isoform 2 is predominantly expressed in embryonic brain; expression persists at low levels in the adult brain.

Its subcellular location is the cytoplasm. It is found in the cytoskeleton. The protein resides in the golgi apparatus. The protein localises to the cell projection. It localises to the axon. Its subcellular location is the dendrite. It is found in the cytoplasmic vesicle. The protein resides in the secretory vesicle membrane. Its function is as follows. Involved in microtubule stabilization in many cell types, including neuronal cells. Specifically has microtubule cold stabilizing activity. Involved in dendrite morphogenesis and maintenance by regulating lysosomal trafficking via its interaction with TMEM106B. Regulates KIF5A-mediated axonal cargo transport. Regulates axonal growth during neuron polarization. In Rattus norvegicus (Rat), this protein is Microtubule-associated protein 6 (Map6).